The sequence spans 80 residues: Large ribosomal subunit protein uL24 (80 aa).

It belongs to the universal ribosomal protein uL24 family. Part of the 50S ribosomal subunit.

In terms of biological role, one of two assembly initiator proteins, it binds directly to the 5'-end of the 23S rRNA, where it nucleates assembly of the 50S subunit. One of the proteins that surrounds the polypeptide exit tunnel on the outside of the subunit. The polypeptide is Large ribosomal subunit protein uL24 (Chlorobium phaeobacteroides (strain BS1)).